Consider the following 601-residue polypeptide: Elongation factor 4 (601 aa).

Residues 5-187 enclose the tr-type G domain; the sequence is SNIRNFSIIA…AIVERLPAPE (183 aa). GTP contacts are provided by residues 17 to 22 and 134 to 137; these read DHGKST and NKID.

This sequence belongs to the TRAFAC class translation factor GTPase superfamily. Classic translation factor GTPase family. LepA subfamily.

It localises to the cell inner membrane. It carries out the reaction GTP + H2O = GDP + phosphate + H(+). Required for accurate and efficient protein synthesis under certain stress conditions. May act as a fidelity factor of the translation reaction, by catalyzing a one-codon backward translocation of tRNAs on improperly translocated ribosomes. Back-translocation proceeds from a post-translocation (POST) complex to a pre-translocation (PRE) complex, thus giving elongation factor G a second chance to translocate the tRNAs correctly. Binds to ribosomes in a GTP-dependent manner. This is Elongation factor 4 from Oleidesulfovibrio alaskensis (strain ATCC BAA-1058 / DSM 17464 / G20) (Desulfovibrio alaskensis).